Here is a 277-residue protein sequence, read N- to C-terminus: Shikimate dehydrogenase (NADP(+)) (277 aa).

Residues 17–19 (SRS) and Thr64 contribute to the shikimate site. Lys68 acts as the Proton acceptor in catalysis. Shikimate-binding residues include Asn88 and Asp103. NADP(+)-binding positions include 128-132 (GAGGS) and Leu217. Tyr219 contacts shikimate. Residue Gly240 participates in NADP(+) binding.

It belongs to the shikimate dehydrogenase family. In terms of assembly, homodimer.

The catalysed reaction is shikimate + NADP(+) = 3-dehydroshikimate + NADPH + H(+). It participates in metabolic intermediate biosynthesis; chorismate biosynthesis; chorismate from D-erythrose 4-phosphate and phosphoenolpyruvate: step 4/7. Involved in the biosynthesis of the chorismate, which leads to the biosynthesis of aromatic amino acids. Catalyzes the reversible NADPH linked reduction of 3-dehydroshikimate (DHSA) to yield shikimate (SA). The protein is Shikimate dehydrogenase (NADP(+)) of Afipia carboxidovorans (strain ATCC 49405 / DSM 1227 / KCTC 32145 / OM5) (Oligotropha carboxidovorans).